A 183-amino-acid chain; its full sequence is Abscisic acid receptor PYL10 (183 aa).

Residues 20–172 are START-like; the sequence is HELVESQCSS…NLNSLADVTE (153 aa). A disulfide bridge connects residues Cys-27 and Cys-153. Residues Lys-56, 85 to 90, 112 to 118, and Glu-137 each bind abscisate; these read ATKSTE and RLKNYSS. A Gate loop motif is present at residues 81–85; it reads SGLPA. The Latch loop motif lies at 111-113; the sequence is HRL.

Belongs to the PYR/PYL/RCAR abscisic acid intracellular receptor family. In terms of assembly, monomer. Forms heterodimer with PYL13, thus antagonizing PP2Cs-binding and ABA-independent inhibition of PP2Cs. Homodimer. Binds ABA on one subunit only. Binds to CARs protein in an ABA-independent manner, both at the plasma membrane and in the nucleus. Interacts with ABI1 and HAB1, and possibly with other PP2Cs, in an ABA-independent manner.

It localises to the cytoplasm. The protein localises to the nucleus. The protein resides in the cell membrane. Receptor for abscisic acid (ABA) required for ABA-mediated responses such as stomatal closure and germination inhibition. Inhibits the activity of group-A protein phosphatases type 2C (PP2Cs) in an ABA-independent manner but more efficiently when activated by ABA. Can be activated by both (-)-ABA and (+)-ABA. The protein is Abscisic acid receptor PYL10 (PYL10) of Arabidopsis thaliana (Mouse-ear cress).